The sequence spans 204 residues: NAD(P)H dehydrogenase (quinone) FQR1 (204 aa).

Positions 5-192 constitute a Flavodoxin-like domain; the sequence is VYIVYYSMYG…QQAFHQGQYI (188 aa). Residues 11–15, 112–165, and histidine 136 contribute to the FMN site; these read SMYGH and IFYS…SPYG. Tyrosine 13 is a binding site for NAD(+).

Belongs to the WrbA family. It depends on FMN as a cofactor.

The protein resides in the cell membrane. The enzyme catalyses a quinone + NADH + H(+) = a quinol + NAD(+). It catalyses the reaction a quinone + NADPH + H(+) = a quinol + NADP(+). Its function is as follows. Catalyzes the transfer of electrons from NADH and NADPH to several quinones in vitro. May act as detoxification enzyme, and protect against auxin-induced oxidative stress. The polypeptide is NAD(P)H dehydrogenase (quinone) FQR1 (Arabidopsis thaliana (Mouse-ear cress)).